Consider the following 156-residue polypeptide: Ecotin (156 aa).

The N-terminal stretch at 1 to 19 (MKALLIAAGVAALSSTAMA) is a signal peptide. Cys65 and Cys102 are oxidised to a cystine.

Belongs to the protease inhibitor I11 (ecotin) family. Homodimer.

The protein localises to the periplasm. Its function is as follows. General inhibitor of family S1 serine proteases. This chain is Ecotin, found in Pseudomonas aeruginosa (strain ATCC 15692 / DSM 22644 / CIP 104116 / JCM 14847 / LMG 12228 / 1C / PRS 101 / PAO1).